The primary structure comprises 143 residues: uncharacterized protein (143 aa).

A helical transmembrane segment spans residues 65–85; it reads LVWMLVGTIVLSLDIIFPALV.

Its subcellular location is the membrane. This is an uncharacterized protein from Saccharomyces cerevisiae (strain ATCC 204508 / S288c) (Baker's yeast).